The primary structure comprises 90 residues: DNA-binding protein HU-beta (90 aa).

This sequence belongs to the bacterial histone-like protein family. As to quaternary structure, heterodimer of an alpha and a beta chain.

Histone-like DNA-binding protein which is capable of wrapping DNA to stabilize it, and thus to prevent its denaturation under extreme environmental conditions. The protein is DNA-binding protein HU-beta (hupB) of Pseudomonas fluorescens (strain ATCC BAA-477 / NRRL B-23932 / Pf-5).